We begin with the raw amino-acid sequence, 272 residues long: Dermonecrotic toxin SpeSicTox-betaIB2a (272 aa).

Residue His-5 is part of the active site. Residues Glu-25 and Asp-27 each coordinate Mg(2+). Residue His-41 is the Nucleophile of the active site. Intrachain disulfides connect Cys-45/Cys-51 and Cys-47/Cys-191. Asp-85 lines the Mg(2+) pocket.

This sequence belongs to the arthropod phospholipase D family. Class II subfamily. Requires Mg(2+) as cofactor. As to expression, expressed by the venom gland.

It localises to the secreted. It catalyses the reaction an N-(acyl)-sphingosylphosphocholine = an N-(acyl)-sphingosyl-1,3-cyclic phosphate + choline. It carries out the reaction an N-(acyl)-sphingosylphosphoethanolamine = an N-(acyl)-sphingosyl-1,3-cyclic phosphate + ethanolamine. The catalysed reaction is a 1-acyl-sn-glycero-3-phosphocholine = a 1-acyl-sn-glycero-2,3-cyclic phosphate + choline. The enzyme catalyses a 1-acyl-sn-glycero-3-phosphoethanolamine = a 1-acyl-sn-glycero-2,3-cyclic phosphate + ethanolamine. Its function is as follows. Dermonecrotic toxins cleave the phosphodiester linkage between the phosphate and headgroup of certain phospholipids (sphingolipid and lysolipid substrates), forming an alcohol (often choline) and a cyclic phosphate. This toxin acts on sphingomyelin (SM). It may also act on ceramide phosphoethanolamine (CPE), lysophosphatidylcholine (LPC) and lysophosphatidylethanolamine (LPE), but not on lysophosphatidylserine (LPS), and lysophosphatidylglycerol (LPG). It acts by transphosphatidylation, releasing exclusively cyclic phosphate products as second products. Induces dermonecrosis, hemolysis, increased vascular permeability, edema, inflammatory response, and platelet aggregation. The polypeptide is Dermonecrotic toxin SpeSicTox-betaIB2a (Sicarius peruensis (Six-eyed sand spider)).